An 87-amino-acid chain; its full sequence is Guanine nucleotide-binding protein subunit gamma (87 aa).

C84 bears the Cysteine methyl ester mark. Residue C84 is the site of S-geranylgeranyl cysteine attachment. The propeptide at 85–87 (LLV) is removed in mature form.

The protein belongs to the G protein gamma family. G proteins are composed of 3 units, alpha, beta and gamma. In terms of processing, the N-terminus is blocked.

The protein localises to the cell membrane. Functionally, guanine nucleotide-binding proteins (G proteins) are involved as a modulator or transducer in various transmembrane signaling systems. This major G-protein of the squid photoreceptor is involved in visual transduction. The beta and gamma chains are required for the GTPase activity, for replacement of GDP by GTP, and for G protein-effector interaction. The chain is Guanine nucleotide-binding protein subunit gamma from Loligo forbesii (Veined squid).